A 96-amino-acid chain; its full sequence is Aspartyl/glutamyl-tRNA(Asn/Gln) amidotransferase subunit C (96 aa).

A disordered region spans residues 64–96; the sequence is REDEPEPGLPREEVLKNAPDQQDGQFRVPAILE.

Belongs to the GatC family. In terms of assembly, heterotrimer of A, B and C subunits.

The enzyme catalyses L-glutamyl-tRNA(Gln) + L-glutamine + ATP + H2O = L-glutaminyl-tRNA(Gln) + L-glutamate + ADP + phosphate + H(+). The catalysed reaction is L-aspartyl-tRNA(Asn) + L-glutamine + ATP + H2O = L-asparaginyl-tRNA(Asn) + L-glutamate + ADP + phosphate + 2 H(+). Its function is as follows. Allows the formation of correctly charged Asn-tRNA(Asn) or Gln-tRNA(Gln) through the transamidation of misacylated Asp-tRNA(Asn) or Glu-tRNA(Gln) in organisms which lack either or both of asparaginyl-tRNA or glutaminyl-tRNA synthetases. The reaction takes place in the presence of glutamine and ATP through an activated phospho-Asp-tRNA(Asn) or phospho-Glu-tRNA(Gln). This is Aspartyl/glutamyl-tRNA(Asn/Gln) amidotransferase subunit C from Geobacillus thermodenitrificans (strain NG80-2).